The following is a 261-amino-acid chain: Putative phosphite transport system permease protein HtxE (261 aa).

Residues 47 to 253 (EATTETVEVL…VFVFVLDQLQ (207 aa)) enclose the ABC transmembrane type-1 domain. The next 3 membrane-spanning stretches (helical) occupy residues 122-142 (LIVA…GVLA), 203-220 (RNLR…GGIG), and 229-249 (MFQY…VFVL).

It belongs to the binding-protein-dependent transport system permease family.

The protein localises to the cell inner membrane. Functionally, probably forms part of a binding-protein-dependent hypophosphite transporter. The sequence is that of Putative phosphite transport system permease protein HtxE (htxE) from Stutzerimonas stutzeri (Pseudomonas stutzeri).